The following is a 349-amino-acid chain: Flap endonuclease 1 (349 aa).

The N-domain stretch occupies residues 1–98; it reads MDLGEIVEDV…EEIERRKRAK (98 aa). Mg(2+) is bound by residues aspartate 27, aspartate 80, glutamate 152, glutamate 154, aspartate 173, aspartate 175, and aspartate 236. The segment at 116 to 258 is I-domain; it reads EIRKYAQAAV…TALRIIKKYN (143 aa). Residues 341-349 form an interaction with PCNA region; the sequence is KQTGLDQWF.

This sequence belongs to the XPG/RAD2 endonuclease family. FEN1 subfamily. Interacts with PCNA. PCNA stimulates the nuclease activity without altering cleavage specificity. The cofactor is Mg(2+).

Functionally, structure-specific nuclease with 5'-flap endonuclease and 5'-3' exonuclease activities involved in DNA replication and repair. During DNA replication, cleaves the 5'-overhanging flap structure that is generated by displacement synthesis when DNA polymerase encounters the 5'-end of a downstream Okazaki fragment. Binds the unpaired 3'-DNA end and kinks the DNA to facilitate 5' cleavage specificity. Cleaves one nucleotide into the double-stranded DNA from the junction in flap DNA, leaving a nick for ligation. Also involved in the base excision repair (BER) pathway. Acts as a genome stabilization factor that prevents flaps from equilibrating into structures that lead to duplications and deletions. Also possesses 5'-3' exonuclease activity on nicked or gapped double-stranded DNA. In Sulfolobus acidocaldarius (strain ATCC 33909 / DSM 639 / JCM 8929 / NBRC 15157 / NCIMB 11770), this protein is Flap endonuclease 1.